Here is a 112-residue protein sequence, read N- to C-terminus: Prothymosin alpha-B (112 aa).

The disordered stretch occupies residues Met1–Asp112. Over residues Ser9 to Pro35 the composition is skewed to basic and acidic residues. 2 stretches are compositionally biased toward acidic residues: residues Glu41–Glu83 and Glu92–Val101. Residues Glu102 to Asp112 show a composition bias toward basic and acidic residues.

Belongs to the pro/parathymosin family.

It is found in the nucleus. The protein is Prothymosin alpha-B (ptma-b) of Xenopus laevis (African clawed frog).